The chain runs to 611 residues: Leucine aminopeptidase (611 aa).

Substrate is bound by residues 129–131 and 278–282; these read QCQ and GGMEN. His-305 contributes to the Zn(2+) binding site. Glu-306 (proton acceptor) is an active-site residue. Zn(2+) contacts are provided by His-309 and Glu-328. Tyr-393 acts as the Proton donor in catalysis. 562 to 564 contributes to the substrate binding site; it reads RMK.

Belongs to the peptidase M1 family. Zn(2+) serves as cofactor.

It is found in the cytoplasm. It carries out the reaction an epoxide + H2O = an ethanediol. Its function is as follows. Aminopeptidase that preferentially cleaves di- and tripeptides. Also has low epoxide hydrolase activity (in vitro). Can hydrolyze the epoxide leukotriene LTA(4) but it forms preferentially 5,6-dihydroxy-7,9,11,14-eicosatetraenoic acid rather than the cytokine leukotriene B(4) as the product compared to the homologous mammalian enzyme (in vitro). This is Leucine aminopeptidase (LKHA4) from Oryza sativa subsp. japonica (Rice).